The primary structure comprises 230 residues: Cytidylate kinase (230 aa).

10–18 is a binding site for ATP; sequence GPAGSGKST.

The protein belongs to the cytidylate kinase family. Type 1 subfamily.

The protein localises to the cytoplasm. The enzyme catalyses CMP + ATP = CDP + ADP. It catalyses the reaction dCMP + ATP = dCDP + ADP. This is Cytidylate kinase from Leptospira borgpetersenii serovar Hardjo-bovis (strain JB197).